Here is a 209-residue protein sequence, read N- to C-terminus: Octanoyltransferase (209 aa).

The BPL/LPL catalytic domain occupies 30–209 (DHEPEIIYLV…IQTEFNKIFK (180 aa)). Residues 69–76 (RGGKFTFH), 143–145 (AIG), and 156–158 (GVA) contribute to the substrate site. Cys174 acts as the Acyl-thioester intermediate in catalysis.

Belongs to the LipB family.

The protein resides in the cytoplasm. The catalysed reaction is octanoyl-[ACP] + L-lysyl-[protein] = N(6)-octanoyl-L-lysyl-[protein] + holo-[ACP] + H(+). Its pathway is protein modification; protein lipoylation via endogenous pathway; protein N(6)-(lipoyl)lysine from octanoyl-[acyl-carrier-protein]: step 1/2. Its function is as follows. Catalyzes the transfer of endogenously produced octanoic acid from octanoyl-acyl-carrier-protein onto the lipoyl domains of lipoate-dependent enzymes. Lipoyl-ACP can also act as a substrate although octanoyl-ACP is likely to be the physiological substrate. In Rickettsia africae (strain ESF-5), this protein is Octanoyltransferase.